We begin with the raw amino-acid sequence, 548 residues long: Pentatricopeptide repeat-containing protein At5g15300 (548 aa).

PPR repeat units lie at residues 76-110 (DVSI…GVSP), 111-145 (DRYT…GFVL), 146-176 (NEYV…SAKA), 177-211 (HKVA…DQVA), 212-238 (WNVM…FTEK), 239-273 (DVVT…GEHP), 274-308 (DVVT…ASVS), 314-348 (GTPI…DLST), 349-378 (WNTL…KVWP), 379-409 (NEVT…MRDM), and 415-445 (NIKH…MKIE). The type E motif stretch occupies residues 450 to 525 (VWRTLLGACK…PTGVSLIEED (76 aa)).

This sequence belongs to the PPR family. PCMP-E subfamily.

The polypeptide is Pentatricopeptide repeat-containing protein At5g15300 (PCMP-E40) (Arabidopsis thaliana (Mouse-ear cress)).